We begin with the raw amino-acid sequence, 395 residues long: Argininosuccinate synthase (395 aa).

Ala-8–Ser-16 lines the ATP pocket. L-citrulline is bound by residues Tyr-86 and Ser-91. Residue Gly-116 participates in ATP binding. Positions 118, 122, and 123 each coordinate L-aspartate. An L-citrulline-binding site is contributed by Asn-122. Arg-126, Ser-172, Ser-181, Glu-257, and Tyr-269 together coordinate L-citrulline.

It belongs to the argininosuccinate synthase family. Type 1 subfamily. As to quaternary structure, homotetramer.

The protein localises to the cytoplasm. The enzyme catalyses L-citrulline + L-aspartate + ATP = 2-(N(omega)-L-arginino)succinate + AMP + diphosphate + H(+). Its pathway is amino-acid biosynthesis; L-arginine biosynthesis; L-arginine from L-ornithine and carbamoyl phosphate: step 2/3. The sequence is that of Argininosuccinate synthase from Methanosarcina barkeri (strain Fusaro / DSM 804).